The sequence spans 447 residues: Adenylosuccinate synthetase (447 aa).

GTP-binding positions include 12-18 (GDEGKGK) and 40-42 (GHT). The Proton acceptor role is filled by aspartate 13. Residues aspartate 13 and glycine 40 each contribute to the Mg(2+) site. IMP contacts are provided by residues 13–16 (DEGK), 38–41 (NAGH), threonine 128, arginine 142, glutamine 223, threonine 238, and arginine 302. Histidine 41 serves as the catalytic Proton donor. 298 to 304 (TTTGRKR) lines the substrate pocket. GTP-binding positions include arginine 304, 330 to 332 (KLD), and 412 to 414 (SLG).

Belongs to the adenylosuccinate synthetase family. In terms of assembly, homodimer. It depends on Mg(2+) as a cofactor.

Its subcellular location is the cytoplasm. It carries out the reaction IMP + L-aspartate + GTP = N(6)-(1,2-dicarboxyethyl)-AMP + GDP + phosphate + 2 H(+). It functions in the pathway purine metabolism; AMP biosynthesis via de novo pathway; AMP from IMP: step 1/2. Plays an important role in the de novo pathway of purine nucleotide biosynthesis. Catalyzes the first committed step in the biosynthesis of AMP from IMP. The protein is Adenylosuccinate synthetase of Nostoc sp. (strain PCC 7120 / SAG 25.82 / UTEX 2576).